The following is a 552-amino-acid chain: Phosphoglucomutase (552 aa).

S143 (phosphoserine intermediate) is an active-site residue. Mg(2+)-binding residues include S143, D295, D297, and D299.

This sequence belongs to the phosphohexose mutase family. Mg(2+) serves as cofactor.

The enzyme catalyses alpha-D-glucose 1-phosphate = alpha-D-glucose 6-phosphate. It participates in glycolipid metabolism; diglucosyl-diacylglycerol biosynthesis. Functionally, catalyzes the interconversion between glucose-6-phosphate and alpha-glucose-1-phosphate. This is the first step in the biosynthesis of diglucosyl-diacylglycerol (Glc2-DAG), i.e. the predominant glycolipid found in the S.aureus membrane, which is also used as a membrane anchor for lipoteichoic acid (LTA). This Staphylococcus aureus (strain USA300) protein is Phosphoglucomutase (pgcA).